Consider the following 80-residue polypeptide: UPF0248 protein YG5714_2801 (80 aa).

Belongs to the UPF0248 family.

This chain is UPF0248 protein YG5714_2801, found in Saccharolobus islandicus (strain Y.G.57.14 / Yellowstone #1) (Sulfolobus islandicus).